We begin with the raw amino-acid sequence, 396 residues long: MKRHLGTCLWVLCLASTAFSSLAVTTSPKPTLASAFSGKSKTTAGTTAVKANKTTVELLPMVINTWKFTAANVLAWRILKQSKGGLRQTRNAVVEGCSKCEKLQCDRTVGYGGSPDELGETTLDAMVMDGATMDVGAVAGLRRIKDAIKVARHVLEHTQHTMLVGDAASAFANAMGFESESLITPESKDMWLQWTAENCQPNFWKNVHPDPKVSCGPYKPRPTPLTRWKEDRARNEYEIGRKNHDTIGMIAIDVESNIHAGTSTNGARHKIPGRVGDSPIPGAGAYADNEVGAAVATGDGDVMMRFLPSLLAVEAMRAGKPPAEAAQEGLRRILKYHKDFMGALIAVDRLGNYAAACYGLDEFPFMVSSPAGTDGPTRLETVKCIAGQDKVNVVSL.

The first 23 residues, 1–23, serve as a signal peptide directing secretion; it reads MKRHLGTCLWVLCLASTAFSSLA. Cystine bridges form between C100–C105 and C199–C215. Residue T246 is the Nucleophile of the active site. Substrate-binding positions include 274-277 and 297-300; these read RVGD and TGDG. A disulfide bridge links C357 with C384.

The protein belongs to the Ntn-hydrolase family. Heterotetramer of two alpha and two beta chains arranged as a dimer of alpha/beta heterodimers. Post-translationally, cleaved into an alpha and beta chain by autocatalysis; this activates the enzyme. The N-terminal residue of the beta subunit is responsible for the nucleophile hydrolase activity.

The enzyme catalyses N(4)-(beta-N-acetyl-D-glucosaminyl)-L-asparagine + H2O = N-acetyl-beta-D-glucosaminylamine + L-aspartate + H(+). Cleaves the GlcNAc-Asn bond which joins oligosaccharides to the peptide of asparagine-linked glycoproteins. The polypeptide is Putative N(4)-(beta-N-acetylglucosaminyl)-L-asparaginase GG24090 (Drosophila erecta (Fruit fly)).